Reading from the N-terminus, the 380-residue chain is Protein Wnt-5a (380 aa).

Positions 1–35 (MKKSIGILSPGVALGMAGSAMSSKFFLVALAIFFS) are cleaved as a signal peptide. The propeptide occupies 36-61 (FAQVVIEANSWWSLGMNNPVQMSEVY). A disulfide bridge links cysteine 104 with cysteine 115. Residues asparagine 114 and asparagine 120 are each glycosylated (N-linked (GlcNAc...) asparagine). 10 cysteine pairs are disulfide-bonded: cysteine 154-cysteine 162, cysteine 164-cysteine 182, cysteine 238-cysteine 252, cysteine 240-cysteine 247, cysteine 309-cysteine 340, cysteine 325-cysteine 335, cysteine 339-cysteine 379, cysteine 355-cysteine 370, cysteine 357-cysteine 367, and cysteine 362-cysteine 363. Residue serine 244 is the site of O-palmitoleoyl serine; by PORCN attachment. 2 N-linked (GlcNAc...) asparagine glycosylation sites follow: asparagine 312 and asparagine 326.

The protein belongs to the Wnt family. In terms of assembly, forms a soluble 1:1 complex with AFM; this prevents oligomerization and is required for prolonged biological activity. The complex with AFM may represent the physiological form in body fluids. Homooligomer; disulfide-linked, leading to inactivation (in vitro). Interacts with PORCN. Interacts with WLS. Interacts with glypican GCP3. Interacts with PKD1 (via extracellular domain). Interacts with TMEM67. In terms of processing, glycosylation is necessary for secretion but not for activity. Palmitoleoylation is required for efficient binding to frizzled receptors. Depalmitoleoylation leads to Wnt signaling pathway inhibition. Post-translationally, proteolytic processing by TIKI1 and TIKI2 promotes oxidation and formation of large disulfide-bond oligomers, leading to inactivation of WNT5A. Expression is increased in differentiated thyroid carcinomas compared to normal thyroid tissue and anaplastic thyroid tumors where expression is low or undetectable. Expression is found in thyrocytes but not in stromal cells (at protein level). Detected in neonate heart and lung.

It localises to the secreted. It is found in the extracellular space. The protein localises to the extracellular matrix. In terms of biological role, ligand for members of the frizzled family of seven transmembrane receptors. Can activate or inhibit canonical Wnt signaling, depending on receptor context. In the presence of FZD4, activates beta-catenin signaling. In the presence of ROR2, inhibits the canonical Wnt pathway by promoting beta-catenin degradation through a GSK3-independent pathway which involves down-regulation of beta-catenin-induced reporter gene expression. Suppression of the canonical pathway allows chondrogenesis to occur and inhibits tumor formation. Stimulates cell migration. Decreases proliferation, migration, invasiveness and clonogenicity of carcinoma cells and may act as a tumor suppressor. Mediates motility of melanoma cells. Required during embryogenesis for extension of the primary anterior-posterior axis and for outgrowth of limbs and the genital tubercle. Inhibits type II collagen expression in chondrocytes. The chain is Protein Wnt-5a (WNT5A) from Homo sapiens (Human).